The following is a 466-amino-acid chain: Methylenetetrahydrofolate--tRNA-(uracil-5-)-methyltransferase TrmFO (466 aa).

14–19 (GGGLAG) provides a ligand contact to FAD.

Belongs to the MnmG family. TrmFO subfamily. The cofactor is FAD.

The protein localises to the cytoplasm. The catalysed reaction is uridine(54) in tRNA + (6R)-5,10-methylene-5,6,7,8-tetrahydrofolate + NADH + H(+) = 5-methyluridine(54) in tRNA + (6S)-5,6,7,8-tetrahydrofolate + NAD(+). It catalyses the reaction uridine(54) in tRNA + (6R)-5,10-methylene-5,6,7,8-tetrahydrofolate + NADPH + H(+) = 5-methyluridine(54) in tRNA + (6S)-5,6,7,8-tetrahydrofolate + NADP(+). Catalyzes the folate-dependent formation of 5-methyl-uridine at position 54 (M-5-U54) in all tRNAs. This chain is Methylenetetrahydrofolate--tRNA-(uracil-5-)-methyltransferase TrmFO, found in Brucella suis (strain ATCC 23445 / NCTC 10510).